The primary structure comprises 384 residues: Sialyltransferase-like protein 3 (384 aa).

Residues 1–5 are Cytoplasmic-facing; sequence MKRRH. A helical; Signal-anchor for type II membrane protein membrane pass occupies residues 6–26; that stretch reads WSHPSCGLLLLVAVFCLLLVF. The Lumenal segment spans residues 27 to 384; that stretch reads RCSQLRHSGD…FRLPPVSFYR (358 aa). A glycan (N-linked (GlcNAc...) asparagine) is linked at Asn241.

It belongs to the glycosyltransferase 29 family.

The protein resides in the golgi apparatus membrane. Its function is as follows. Possesses sialyltransferase-like activity in vitro. Transfers sialic acid to the glycoprotein asialofetuin. The transferred sialic acid is linked to galactose of Gal-beta-1,3-GalNAc through alpha-2,6-linkage. This chain is Sialyltransferase-like protein 3, found in Oryza sativa subsp. japonica (Rice).